The following is a 26-amino-acid chain: Conotoxin Eb6.15 (26 aa).

2 cysteine pairs are disulfide-bonded: Cys-7/Cys-18 and Cys-13/Cys-25.

Belongs to the conotoxin O1 superfamily. As to expression, expressed by the venom duct.

It localises to the secreted. In Conus ebraeus (Hebrew cone), this protein is Conotoxin Eb6.15 (E1).